Reading from the N-terminus, the 184-residue chain is Large ribosomal subunit protein uL5 (184 aa).

Belongs to the universal ribosomal protein uL5 family. Part of the 50S ribosomal subunit; part of the 5S rRNA/L5/L18/L25 subcomplex. Contacts the 5S rRNA and the P site tRNA. Forms a bridge to the 30S subunit in the 70S ribosome.

Its function is as follows. This is one of the proteins that bind and probably mediate the attachment of the 5S RNA into the large ribosomal subunit, where it forms part of the central protuberance. In the 70S ribosome it contacts protein S13 of the 30S subunit (bridge B1b), connecting the 2 subunits; this bridge is implicated in subunit movement. Contacts the P site tRNA; the 5S rRNA and some of its associated proteins might help stabilize positioning of ribosome-bound tRNAs. The chain is Large ribosomal subunit protein uL5 from Thermotoga sp. (strain RQ2).